We begin with the raw amino-acid sequence, 467 residues long: H(+)/Cl(-) exchange transporter ClcA (467 aa).

At 1–30 (MKSQTIPTRRVRGFRRAAVIRQLLSRDKTP) the chain is on the cytoplasmic side. The helical transmembrane segment at 31–67 (LTILLLASLTGVLAGLAGVAFEKAVAWVTAHRIEGLA) threads the bilayer. The Periplasmic portion of the chain corresponds to 68–74 (QVAHIPW). The chain crosses the membrane as a helical span at residues 75-98 (LVWLLAFLFSALLAMVGYFLVRRF). At 99–106 (APEAGGSG) the chain is on the cytoplasmic side. The short motif at 104–108 (GSGIP) is the Selectivity filter part_1 element. Ser-105 lines the chloride pocket. An intramembrane region (helical) is located at residues 107 to 114 (IPEIEGAL). Over 115-121 (EELRPVR) the chain is Cytoplasmic. The chain crosses the membrane as a helical span at residues 122–139 (WWRVLPVKFFGGMGTLGA). The Periplasmic portion of the chain corresponds to 140–145 (GMVLGR). Positions 144–148 (GREGP) match the Selectivity filter part_2 motif. The helical transmembrane segment at 146–164 (EGPMVQMGGNIGRMVLDIF) threads the bilayer. At 165 to 174 (HRPDAEARHT) the chain is on the cytoplasmic side. 2 intramembrane regions (helical) span residues 175–187 (LLATGAAAGLAAA) and 191–199 (PLAGILFII). Topologically, residues 200-212 (EEMRTQFHYNLIS) are cytoplasmic. Residues 213 to 230 (IKAVFTGVIMSTIVFRIF) form a helical membrane-spanning segment. Residues 231 to 250 (NGEKSVIEVGQLTDAPVYTL) lie on the Periplasmic side of the membrane. Residues 251-279 (WLYLLLGIIFGAVGPLFNRLVLGMQDVFA) form a helical membrane-spanning segment. The Cytoplasmic portion of the chain corresponds to 280-285 (RIHGGN). The chain crosses the membrane as a helical span at residues 286–307 (TTRWVLLGGAIGGACGLLALWE). The Periplasmic segment spans residues 308 to 327 (PAAAGGGFGLIPIAAAGNFT). Residues 328–347 (VGMLLFIFIARVVTTVFCFS) form a helical membrane-spanning segment. At 348–352 (SGAPG) the chain is on the cytoplasmic side. A Selectivity filter part_3 motif is present at residues 353–357 (GIFAP). The chain crosses the membrane as a helical span at residues 353 to 374 (GIFAPMLALGTLLGSAFGMACA). Residues Ile-354 and Phe-355 each contribute to the chloride site. At 375–384 (AWFPQWHLQA) the chain is on the periplasmic side. The segment at residues 385–399 (GTFAIAGMGALLAAS) is an intramembrane region (helical). An intramembrane region (note=Loop between two helices) is located at residues 400–402 (VRA). Residues 403 to 414 (PITGIVLVLEMT) constitute an intramembrane region (helical). The segment at residues 415–419 (DNYQL) is an intramembrane region (note=Loop between two helices). A helical transmembrane segment spans residues 420–436 (ILPMIITCLGATLLAQF). Residues 437-467 (LGGKPLYSTILARTLAKQEAERQAQADGRNT) are Cytoplasmic-facing. Residue Tyr-443 coordinates chloride.

Belongs to the chloride channel (TC 2.A.49) family. ClcA subfamily. Homodimer.

It localises to the cell inner membrane. It catalyses the reaction 2 chloride(in) + H(+)(out) = 2 chloride(out) + H(+)(in). Proton-coupled chloride transporter. Functions as antiport system and exchanges two chloride ions for 1 proton. Probably acts as an electrical shunt for an outwardly-directed proton pump that is linked to amino acid decarboxylation, as part of the extreme acid resistance (XAR) response. The chain is H(+)/Cl(-) exchange transporter ClcA from Cronobacter sakazakii (strain ATCC BAA-894) (Enterobacter sakazakii).